The primary structure comprises 129 residues: Lysozyme C (129 aa).

Residues 1–129 (KVYGRCELAA…VSVWTRGCRL (129 aa)) form the C-type lysozyme domain. Cystine bridges form between C6/C127, C30/C115, C64/C80, and C76/C94. Residues E35 and D52 contribute to the active site.

The protein belongs to the glycosyl hydrolase 22 family. As to quaternary structure, monomer.

The protein resides in the secreted. The catalysed reaction is Hydrolysis of (1-&gt;4)-beta-linkages between N-acetylmuramic acid and N-acetyl-D-glucosamine residues in a peptidoglycan and between N-acetyl-D-glucosamine residues in chitodextrins.. Functionally, lysozymes have primarily a bacteriolytic function; those in tissues and body fluids are associated with the monocyte-macrophage system and enhance the activity of immunoagents. This Lophura leucomelanos (Kalij pheasant) protein is Lysozyme C (LYZ).